The chain runs to 222 residues: Pyridoxal phosphate homeostasis protein (222 aa).

Lys-35 carries the N6-(pyridoxal phosphate)lysine modification.

Belongs to the pyridoxal phosphate-binding protein YggS/PROSC family.

Its function is as follows. Pyridoxal 5'-phosphate (PLP)-binding protein, which is involved in PLP homeostasis. This chain is Pyridoxal phosphate homeostasis protein, found in Helicobacter pylori (strain J99 / ATCC 700824) (Campylobacter pylori J99).